We begin with the raw amino-acid sequence, 308 residues long: Mitochondrial brown fat uncoupling protein 1 (308 aa).

Topologically, residues 1–10 are mitochondrial intermembrane; the sequence is MVASAEADVP. A helical transmembrane segment spans residues 11–33; the sequence is PPTMLVKIASAGLSACLADIITF. 3 Solcar repeats span residues 11-103, 112-202, and 211-296; these read PPTM…VQEY, ATLG…LKEA, and DDIP…LKKE. Residues 34 to 74 lie on the Mitochondrial matrix side of the membrane; sequence PLDTAKVRLQVQGERPNAPGVKYKGVLGTIATVAKTEGPLK. Lys-57 serves as a coordination point for fatty acid 16:0. Residues 75–97 traverse the membrane as a helical segment; the sequence is LYGGLPAGIQRQISFASLRIGLY. Residues 98 to 117 are Mitochondrial intermembrane-facing; that stretch reads DTVQEYFNAHRKTPATLGNK. The helical transmembrane segment at 118–134 threads the bilayer; it reads ISAGLMTGCVTVFIGQP. The Mitochondrial matrix segment spans residues 135 to 179; the sequence is TEVAKVRMQAQSSLHWLKPRYSGTYNAYYVIVKTEGFLGLWKGTS. A helical transmembrane segment spans residues 180 to 196; the sequence is LNLTRNVIINCTELVVY. Over 197–213 the chain is Mitochondrial intermembrane; sequence DVLKEALVKNNVLADDI. The chain crosses the membrane as a helical span at residues 214-233; the sequence is PCHLLAALTAGFCTTALASP. Topologically, residues 234 to 267 are mitochondrial matrix; the sequence is VDVVKTRFINSPPGYYPHVHNCALNMLQKEGLRA. The residue at position 255 (Cys-255) is a Cysteine sulfenic acid (-SOH). A helical membrane pass occupies residues 268-290; sequence FFKGFVPSFLRLGSWTVIMHVTF. Lys-270 contributes to the fatty acid 16:0 binding site. At 291–308 the chain is on the mitochondrial intermembrane side; that stretch reads EQLKKELMKSRQTVDCAT.

Belongs to the mitochondrial carrier (TC 2.A.29) family. In terms of assembly, most probably functions as a monomer. Binds one purine nucleotide per monomer. However, has also been suggested to function as a homodimer or a homotetramer. Tightly associates with cardiolipin in the mitochondrion inner membrane; may stabilize and regulate its activity. May undergo sulfenylation upon cold exposure. May increase the sensitivity of UCP1 thermogenic function to the activation by noradrenaline probably through structural effects. In terms of processing, may undergo ubiquitin-mediated proteasomal degradation. In terms of tissue distribution, brown adipose tissue.

The protein localises to the mitochondrion inner membrane. It catalyses the reaction H(+)(in) = H(+)(out). With respect to regulation, has no constitutive proton transporter activity and has to be activated by long-chain fatty acids/LCFAs. Inhibited by purine nucleotides. Both purine nucleotides and LCFAs bind the cytosolic side of the transporter and directly compete to activate or inhibit it. Activated by noradrenaline and reactive oxygen species. Despite lacking canonical translational encoding for selenocysteine, a small pool of the protein has been observed to selectively incorporate selenocysteine at 'Cys-255'. Selenocysteine-modified protein is highly sensitive to redox modification and may constitute a pool of protein highly sensitive to activation by elevated levels of reactive oxygen species (ROS). Mitochondrial protein responsible for thermogenic respiration, a specialized capacity of brown adipose tissue and beige fat that participates in non-shivering adaptive thermogenesis to temperature and diet variations and more generally to the regulation of energy balance. Functions as a long-chain fatty acid/LCFA and proton symporter, simultaneously transporting one LCFA and one proton through the inner mitochondrial membrane. However, LCFAs remaining associated with the transporter via their hydrophobic tails, it results in an apparent transport of protons activated by LCFAs. Thereby, dissipates the mitochondrial proton gradient and converts the energy of substrate oxydation into heat instead of ATP. Regulates the production of reactive oxygen species/ROS by mitochondria. The polypeptide is Mitochondrial brown fat uncoupling protein 1 (Suncus murinus (Asian house shrew)).